Reading from the N-terminus, the 342-residue chain is Nucleoid-associated protein Sbal223_1817 (342 aa).

It belongs to the YejK family.

Its subcellular location is the cytoplasm. It is found in the nucleoid. The sequence is that of Nucleoid-associated protein Sbal223_1817 from Shewanella baltica (strain OS223).